Consider the following 221-residue polypeptide: Cutinase 3 (221 aa).

An N-terminal signal peptide occupies residues 1 to 17; it reads MRFHTILLAALASLVIA. Intrachain disulfides connect Cys-44/Cys-122 and Cys-70/Cys-84. Ser-133 acts as the Nucleophile in catalysis. Cys-184 and Cys-191 are joined by a disulfide. Asp-188 is an active-site residue. The active-site Proton donor/acceptor is the His-201.

The protein belongs to the cutinase family.

It localises to the secreted. The catalysed reaction is cutin + H2O = cutin monomers.. Functionally, catalyzes the hydrolysis of complex carboxylic polyesters found in the cell wall of plants. Degrades cutin, a macromolecule that forms the structure of the plant cuticle. Also degrades suberin, a specialized macromolecule found in the cell wall of various plant tissues. The chain is Cutinase 3 from Emericella nidulans (strain FGSC A4 / ATCC 38163 / CBS 112.46 / NRRL 194 / M139) (Aspergillus nidulans).